A 76-amino-acid chain; its full sequence is Sec-independent protein translocase protein TatA (76 aa).

A helical transmembrane segment spans residues 1-21 (MGGLSIWHWLIVLLIVALVFG). The segment at 40-76 (KDGMKEGETPADAQQLPRSGAVDVNAKETTRSDSNKA) is disordered. The span at 64 to 76 (NAKETTRSDSNKA) shows a compositional bias: basic and acidic residues.

Belongs to the TatA/E family. The Tat system comprises two distinct complexes: a TatABC complex, containing multiple copies of TatA, TatB and TatC subunits, and a separate TatA complex, containing only TatA subunits. Substrates initially bind to the TatABC complex, which probably triggers association of the separate TatA complex to form the active translocon.

It localises to the cell inner membrane. Functionally, part of the twin-arginine translocation (Tat) system that transports large folded proteins containing a characteristic twin-arginine motif in their signal peptide across membranes. TatA could form the protein-conducting channel of the Tat system. The polypeptide is Sec-independent protein translocase protein TatA (Burkholderia cenocepacia (strain HI2424)).